The following is a 184-amino-acid chain: Interferon alpha-3 (184 aa).

A signal peptide spans 1 to 23; sequence MALPVSLLMALVVLSCHSSCSLG. Intrachain disulfides connect cysteine 24/cysteine 122 and cysteine 52/cysteine 162.

This sequence belongs to the alpha/beta interferon family.

It localises to the secreted. Its function is as follows. Produced by macrophages, IFN-alpha have antiviral activities. Interferon stimulates the production of two enzymes: a protein kinase and an oligoadenylate synthetase. This Equus caballus (Horse) protein is Interferon alpha-3.